The following is a 91-amino-acid chain: MTDKEVKAPKIEFPVVDYPIKVISDTGVGRKDLILEIVRKHATINDQRVDERSSSTGKYTTIQLHIVATDQDQLYNINSELRATGFVHMVL.

Belongs to the UPF0250 family.

The sequence is that of UPF0250 protein PFLU_5418 from Pseudomonas fluorescens (strain SBW25).